A 329-amino-acid chain; its full sequence is GTP 3',8-cyclase (329 aa).

A Radical SAM core domain is found at 8–234 (AFARKFYYLR…QLRSRADGPA (227 aa)). Arg-17 contributes to the GTP binding site. 2 residues coordinate [4Fe-4S] cluster: Cys-24 and Cys-28. Position 30 (Tyr-30) interacts with S-adenosyl-L-methionine. Cys-31 serves as a coordination point for [4Fe-4S] cluster. Residue Arg-68 participates in GTP binding. Residue Gly-72 participates in S-adenosyl-L-methionine binding. Thr-99 contributes to the GTP binding site. S-adenosyl-L-methionine is bound at residue Ser-123. Residue Lys-160 coordinates GTP. S-adenosyl-L-methionine is bound at residue Met-194. [4Fe-4S] cluster contacts are provided by Cys-257 and Cys-260. 262–264 (RLR) is a GTP binding site. [4Fe-4S] cluster is bound at residue Cys-274.

This sequence belongs to the radical SAM superfamily. MoaA family. In terms of assembly, monomer and homodimer. The cofactor is [4Fe-4S] cluster.

It carries out the reaction GTP + AH2 + S-adenosyl-L-methionine = (8S)-3',8-cyclo-7,8-dihydroguanosine 5'-triphosphate + 5'-deoxyadenosine + L-methionine + A + H(+). Its pathway is cofactor biosynthesis; molybdopterin biosynthesis. Its function is as follows. Catalyzes the cyclization of GTP to (8S)-3',8-cyclo-7,8-dihydroguanosine 5'-triphosphate. The chain is GTP 3',8-cyclase from Cronobacter sakazakii (strain ATCC BAA-894) (Enterobacter sakazakii).